Here is a 316-residue protein sequence, read N- to C-terminus: Malate dehydrogenase (316 aa).

Residues 12 to 17 (GAGNIG) and aspartate 36 contribute to the NAD(+) site. Substrate-binding residues include arginine 85 and arginine 91. Residues asparagine 98 and 121-123 (VTN) each bind NAD(+). 2 residues coordinate substrate: asparagine 123 and arginine 154. Histidine 178 (proton acceptor) is an active-site residue.

It belongs to the LDH/MDH superfamily. MDH type 3 family.

The catalysed reaction is (S)-malate + NAD(+) = oxaloacetate + NADH + H(+). Catalyzes the reversible oxidation of malate to oxaloacetate. In Wolbachia pipientis wMel, this protein is Malate dehydrogenase.